A 527-amino-acid polypeptide reads, in one-letter code: Cytochrome P450 714B3 (527 aa).

The Lumenal segment spans residues 1–14 (MEVAMAMAVKVLLS). A helical; Signal-anchor for type III membrane protein transmembrane segment spans residues 15–35 (LCCVGACGLAVYLYHILWLVP). Residues 36-527 (QKVLAKFEDQ…SVCTKRGTAI (492 aa)) are Cytoplasmic-facing. C464 is a binding site for heme.

It belongs to the cytochrome P450 family. Heme serves as cofactor.

The protein localises to the membrane. In terms of biological role, may be involved in gibberellin metabolism. The sequence is that of Cytochrome P450 714B3 (CYP714B3) from Zea mays (Maize).